Consider the following 285-residue polypeptide: Acrosomal protein SP-10 (285 aa).

Positions 1–21 (MNMFLLLMSLYLLGSARGTSG) are cleaved as a signal peptide. The interval 64 to 200 (TLSEHGSSEH…GEQPSGAPIS (137 aa)) is disordered. Repeat copies occupy residues 66–70 (SEHGS), 71–75 (SEHGS), 85–89 (PGEHA), 91–95 (SEHAS), 110–114 (VGEQP), 115–119 (SGEQP), 120–124 (SGEHL), 125–129 (SGEQS), 130–134 (LGEHA), 135–139 (SGEQP), 145–149 (SGEHA), 150–154 (SGEQP), 155–159 (SGEHA), 160–164 (SGEQP), 165–169 (SGEQP), 170–174 (SGEHA), 175–179 (SGEQS), 180–184 (LGEHA), and 190–194 (SGEQP). Positions 66–95 (SEHGSSEHGSREHTVAEHTPGEHAESEHAS) are 3 X 5 AA repeats of S-E-H-[GA]-A. The span at 69 to 95 (GSSEHGSREHTVAEHTPGEHAESEHAS) shows a compositional bias: basic and acidic residues. The segment at 85–184 (PGEHAESEHA…SGEQSLGEHA (100 aa)) is 7 X 5 AA repeats of S-G-E-H-[AL]. The tract at residues 110-194 (VGEQPSGEQP…LSEKPSGEQP (85 aa)) is 9 X 5 AA repeats of [SV]-G-E-Q-[PSA]. An N-linked (GlcNAc...) asparagine glycan is attached at Asn-278.

Testis.

It is found in the cytoplasmic vesicle. The protein localises to the secretory vesicle. Its subcellular location is the acrosome. This chain is Acrosomal protein SP-10 (ACRV1), found in Papio hamadryas (Hamadryas baboon).